A 129-amino-acid chain; its full sequence is Virion-associated protein (129 aa).

2 coiled-coil regions span residues 1–31 (MANLNQIQKEVSEILSDQKSMKADIKAILEL) and 38–59 (IKESLETVAAKIVNDLTKLIND). The tract at residues 122-129 (PAGWPNQY) is capsid binding.

Belongs to the caulimovirus ORF III family. Homotetramer, through coiled-coil domain. Homotrimer when interacts with icosehadral capsid. Interacts with capsid protein, and with Movement protein.

The protein localises to the virion. It is found in the host cell junction. It localises to the host plasmodesma. In terms of biological role, plays a role in virus cell-to-cell and plant-to-plant transmission. Interacts with virion icosahedral capsid and movement protein, thereby facilitating virion cell-to-cell transmission through plasmodesmata opened by viral movement protein. Also interacts with aphid transmission factor, attaching the virion to aphid stylet when the animal feeds on an virus infected plant. Aphid saliva may later detach the virion, inducing release of infectious particles when the animal feeds on a new plant. The protein is Virion-associated protein of Cauliflower mosaic virus (strain D/H) (CaMV).